The sequence spans 136 residues: Ribosome-binding factor A (136 aa).

The protein belongs to the RbfA family. As to quaternary structure, monomer. Binds 30S ribosomal subunits, but not 50S ribosomal subunits or 70S ribosomes.

Its subcellular location is the cytoplasm. One of several proteins that assist in the late maturation steps of the functional core of the 30S ribosomal subunit. Associates with free 30S ribosomal subunits (but not with 30S subunits that are part of 70S ribosomes or polysomes). Required for efficient processing of 16S rRNA. May interact with the 5'-terminal helix region of 16S rRNA. The sequence is that of Ribosome-binding factor A from Yersinia pestis bv. Antiqua (strain Antiqua).